A 471-amino-acid polypeptide reads, in one-letter code: ATP synthase subunit beta 2 (471 aa).

157–164 (GGAGVGKT) provides a ligand contact to ATP.

Belongs to the ATPase alpha/beta chains family. F-type ATPases have 2 components, CF(1) - the catalytic core - and CF(0) - the membrane proton channel. CF(1) has five subunits: alpha(3), beta(3), gamma(1), delta(1), epsilon(1). CF(0) has three main subunits: a(1), b(2) and c(9-12). The alpha and beta chains form an alternating ring which encloses part of the gamma chain. CF(1) is attached to CF(0) by a central stalk formed by the gamma and epsilon chains, while a peripheral stalk is formed by the delta and b chains.

Its subcellular location is the cell inner membrane. The catalysed reaction is ATP + H2O + 4 H(+)(in) = ADP + phosphate + 5 H(+)(out). Produces ATP from ADP in the presence of a proton gradient across the membrane. The catalytic sites are hosted primarily by the beta subunits. This chain is ATP synthase subunit beta 2, found in Pelobacter propionicus (strain DSM 2379 / NBRC 103807 / OttBd1).